Consider the following 153-residue polypeptide: UPF0756 membrane protein BA_4840/GBAA_4840/BAS4489 (153 aa).

The next 4 helical transmembrane spans lie at 8 to 28 (FLFI…TVAI), 54 to 74 (LGVT…EIGF), 87 to 107 (WIAL…VQLL), and 117 to 137 (LVFG…GPLI).

This sequence belongs to the UPF0756 family.

The protein resides in the cell membrane. This is UPF0756 membrane protein BA_4840/GBAA_4840/BAS4489 from Bacillus anthracis.